A 438-amino-acid chain; its full sequence is Xylose isomerase (438 aa).

Residues H100 and D103 contribute to the active site. E231, E267, H270, D295, D306, D308, and D338 together coordinate Mg(2+).

The protein belongs to the xylose isomerase family. In terms of assembly, homotetramer. Mg(2+) serves as cofactor.

Its subcellular location is the cytoplasm. It catalyses the reaction alpha-D-xylose = alpha-D-xylulofuranose. This Thermoanaerobacter pseudethanolicus (strain ATCC 33223 / 39E) (Clostridium thermohydrosulfuricum) protein is Xylose isomerase (xylA).